The sequence spans 191 residues: Adenylate kinase (191 aa).

12–17 (GSGKTT) provides a ligand contact to ATP. The tract at residues 33–62 (STGDLLRAEVASGSELGKLIDSFISKGNLV) is NMP. Residues T34, R39, 60-62 (NLV), 87-90 (GYPR), and Q94 contribute to the AMP site. Residues 129–135 (GRARGAD) are LID. ATP is bound at residue R130. Residues R132 and R144 each coordinate AMP. Residue R172 coordinates ATP.

This sequence belongs to the adenylate kinase family. Monomer.

It is found in the cytoplasm. The enzyme catalyses AMP + ATP = 2 ADP. It functions in the pathway purine metabolism; AMP biosynthesis via salvage pathway; AMP from ADP: step 1/1. Catalyzes the reversible transfer of the terminal phosphate group between ATP and AMP. Plays an important role in cellular energy homeostasis and in adenine nucleotide metabolism. The polypeptide is Adenylate kinase (Campylobacter fetus subsp. fetus (strain 82-40)).